The following is a 566-amino-acid chain: Alpha-keto-acid decarboxylase (566 aa).

Glu-61 is a binding site for thiamine diphosphate. The interval 396-478 is thiamine pyrophosphate binding; sequence TSFYGMADHR…VVVNNDGYTV (83 aa). The Mg(2+) site is built by Asp-446, Asn-473, and Gly-475.

It belongs to the TPP enzyme family. The cofactor is a metal cation. It depends on thiamine diphosphate as a cofactor.

Functionally, decarboxylates branched-chain and aromatic alpha-keto acids to aldehydes. This is Alpha-keto-acid decarboxylase (kdc) from Mycobacterium ulcerans (strain Agy99).